The sequence spans 982 residues: Hunchback-like protein (982 aa).

Positions 87-194 (QPGEKIHPDG…SNYQVTSEPV (108 aa)) are disordered. A compositionally biased stretch (basic and acidic residues) spans 101-110 (PKEDGRKSSE). Residues 111–132 (HTNSYDVSASQSPSNDGAQSDS) show a composition bias toward polar residues. A compositionally biased stretch (acidic residues) spans 142-152 (CMTETEMDTDE). Residues 153–175 (KDSTIKPEDQATPKLEEGSDSKP) show a composition bias toward basic and acidic residues. The span at 176-193 (ESTSVEGTSSNYQVTSEP) shows a compositional bias: polar residues. 7 C2H2-type zinc fingers span residues 336 to 358 (LVCPICGFMCPSKFHFNSHMNTH), 361 to 384 (HQCSMCDYTSRTEGRLKKHMRESH), 538 to 560 (FKCKQCGHQSLSKDDQWAHARTH), 567 to 589 (LNCQHCNFVTEYKHHLEYHYRNH), 595 to 617 (FQCKKCAYNCVNKSMLNSHMKSH), 623 to 647 (FRCMDCTYATKYCHSLKLHLKKYNH), and 734 to 756 (LKCSACDFVASSADEKMRHSMSH). Residues 377 to 415 (KKHMRESHTVEEQLRAGFESEPAKESASSPKNLSLSKDG) form a disordered region. The interval 811 to 896 (EEMDQGSDSA…PPLHSSSIVA (86 aa)) is disordered. Composition is skewed to polar residues over residues 816–831 (GSDSAVSPTGSSQISS) and 843–862 (SLEQISARANGNNSPMSNDS). Positions 863–875 (AMEKDGESADDAP) are enriched in basic and acidic residues. C2H2-type zinc fingers lie at residues 929–951 (FYCDHCKIPFDTQQVLDSHMRFH) and 957–981 (FMCSDCQYQAFNELSFALHMYQARH).

It belongs to the hunchback C2H2-type zinc-finger protein family. As to expression, expressed primarily in ectodermal cells during embryonic and larval development.

It localises to the nucleus. In terms of biological role, required for the late stages of development. Plays a role in the developmental timing of postembryonic hypodermal seam cell fusion events and adult alae production. This is Hunchback-like protein from Caenorhabditis elegans.